Consider the following 301-residue polypeptide: Ribosomal RNA small subunit methyltransferase A (301 aa).

S-adenosyl-L-methionine is bound by residues Asn23, Ile25, Gly50, Glu72, Asp97, and Asn149.

This sequence belongs to the class I-like SAM-binding methyltransferase superfamily. rRNA adenine N(6)-methyltransferase family. RsmA subfamily.

The protein resides in the cytoplasm. The catalysed reaction is adenosine(1518)/adenosine(1519) in 16S rRNA + 4 S-adenosyl-L-methionine = N(6)-dimethyladenosine(1518)/N(6)-dimethyladenosine(1519) in 16S rRNA + 4 S-adenosyl-L-homocysteine + 4 H(+). Its function is as follows. Specifically dimethylates two adjacent adenosines (A1518 and A1519) in the loop of a conserved hairpin near the 3'-end of 16S rRNA in the 30S particle. May play a critical role in biogenesis of 30S subunits. The sequence is that of Ribosomal RNA small subunit methyltransferase A from Rickettsia peacockii (strain Rustic).